The chain runs to 396 residues: Elongation factor Tu 2 (396 aa).

In terms of domain architecture, tr-type G spans 10–206; it reads KPHVNVGTIG…AIDSYIPEPE (197 aa). Positions 19-26 are G1; sequence GHIDHGKT. Residue 19-26 coordinates GTP; sequence GHIDHGKT. Threonine 26 serves as a coordination point for Mg(2+). Residues 60 to 64 form a G2 region; sequence GITIA. The interval 81–84 is G3; that stretch reads DCPG. GTP contacts are provided by residues 81-85 and 136-139; these read DCPGH and NKCD. The segment at 136-139 is G4; sequence NKCD. Positions 174–176 are G5; it reads SAL.

Belongs to the TRAFAC class translation factor GTPase superfamily. Classic translation factor GTPase family. EF-Tu/EF-1A subfamily. Monomer.

It is found in the cytoplasm. It carries out the reaction GTP + H2O = GDP + phosphate + H(+). Its function is as follows. GTP hydrolase that promotes the GTP-dependent binding of aminoacyl-tRNA to the A-site of ribosomes during protein biosynthesis. The polypeptide is Elongation factor Tu 2 (Desulfotalea psychrophila (strain LSv54 / DSM 12343)).